The chain runs to 1113 residues: Tudor domain-containing protein 7 (1113 aa).

HTH OST-type domains follow at residues 3-76 (EADL…YAVA) and 249-318 (KMDE…YPAK). Basic and acidic residues predominate over residues 320–334 (EQPLRSDQDPEKERP). The tract at residues 320 to 352 (EQPLRSDQDPEKERPPPPPAPRQEVPSKGSPAV) is disordered. One can recognise an HTH OST-type 3 domain in the interval 352–421 (VMPDVKEKVA…TQKAILYAKL (70 aa)). 2 consecutive Tudor domains span residues 528 to 585 (TVHV…FCSL) and 718 to 775 (LPFC…FLQE). The segment at 873–895 (SSPGNRNASTPAPGSPAESLRKS) is disordered. S874 is subject to Phosphoserine. The span at 875-884 (PGNRNASTPA) shows a compositional bias: polar residues. Positions 876–1113 (GNRNASTPAP…QYLVELSKAN (238 aa)) are interaction with CDK17. The segment at 908 to 1113 (TSSFSLEELP…QYLVELSKAN (206 aa)) is interaction with CABLES1.

The protein belongs to the TDRD7 family. As to quaternary structure, found in a mRNP complex, at least composed of TDRD1, TDRD6, TDRD7 and DDX4. Found in a complex containing CABLES1, CDK16 and CDK17. Interacts with CABLES1, CDK17 and PIWIL1. As to expression, expressed in brain and testis.

The protein resides in the cytoplasm. Its function is as follows. Component of specific cytoplasmic RNA granules involved in post-transcriptional regulation of specific genes: probably acts by binding to specific mRNAs and regulating their translation. Required for lens transparency during lens development, by regulating translation of genes such as CRYBB3 and HSPB1 in the developing lens. Also required during spermatogenesis. This Rattus norvegicus (Rat) protein is Tudor domain-containing protein 7 (Tdrd7).